We begin with the raw amino-acid sequence, 280 residues long: MDIKAYAKINISLDVIGKRDDGYHLLKMIMQNIDLYDIVQVEKIPNGIKLKCNKPYVPTDERNLAYKAAKLFKETYNIKSGIYINIEKNIPVSAGLAGGSTDAAAVLKIMNKMFNINVTQSELMNLGLKLGADVPYCICGGTALCEGIGEKVTKLKPFRDKILVVVKPPFGVSTKEVYKAFDLSKVIFHPKTNELISNIEKNNIEFISNNMKNLLENVTLGRYKIISTIKEEINICGALGSMMSGSGPTVFGFFDDMLKAQKCYEKMKEKYVDVFITRTI.

Residue lysine 8 is part of the active site. ATP is bound at residue 91-101 (PVSAGLAGGST). Aspartate 133 is a catalytic residue.

Belongs to the GHMP kinase family. IspE subfamily.

It catalyses the reaction 4-CDP-2-C-methyl-D-erythritol + ATP = 4-CDP-2-C-methyl-D-erythritol 2-phosphate + ADP + H(+). The protein operates within isoprenoid biosynthesis; isopentenyl diphosphate biosynthesis via DXP pathway; isopentenyl diphosphate from 1-deoxy-D-xylulose 5-phosphate: step 3/6. Catalyzes the phosphorylation of the position 2 hydroxy group of 4-diphosphocytidyl-2C-methyl-D-erythritol. This Clostridium botulinum (strain Alaska E43 / Type E3) protein is 4-diphosphocytidyl-2-C-methyl-D-erythritol kinase.